The following is a 158-amino-acid chain: Endoribonuclease YbeY (158 aa).

3 residues coordinate Zn(2+): H124, H128, and H134.

Belongs to the endoribonuclease YbeY family. Zn(2+) serves as cofactor.

The protein localises to the cytoplasm. In terms of biological role, single strand-specific metallo-endoribonuclease involved in late-stage 70S ribosome quality control and in maturation of the 3' terminus of the 16S rRNA. The polypeptide is Endoribonuclease YbeY (Caldicellulosiruptor saccharolyticus (strain ATCC 43494 / DSM 8903 / Tp8T 6331)).